The sequence spans 63 residues: Large ribosomal subunit protein bL28 (63 aa).

It belongs to the bacterial ribosomal protein bL28 family.

The sequence is that of Large ribosomal subunit protein bL28 from Clostridium kluyveri (strain NBRC 12016).